The chain runs to 592 residues: Aspartate--tRNA ligase (592 aa).

E173 provides a ligand contact to L-aspartate. Positions 197 to 200 are aspartate; it reads QLFK. R219 contributes to the L-aspartate binding site. ATP-binding positions include 219 to 221 and Q228; that span reads RDE. H449 lines the L-aspartate pocket. ATP is bound at residue E483. L-aspartate is bound at residue R490. 535–538 is a binding site for ATP; it reads GLDR.

This sequence belongs to the class-II aminoacyl-tRNA synthetase family. Type 1 subfamily. As to quaternary structure, homodimer.

Its subcellular location is the cytoplasm. The catalysed reaction is tRNA(Asp) + L-aspartate + ATP = L-aspartyl-tRNA(Asp) + AMP + diphosphate. In terms of biological role, catalyzes the attachment of L-aspartate to tRNA(Asp) in a two-step reaction: L-aspartate is first activated by ATP to form Asp-AMP and then transferred to the acceptor end of tRNA(Asp). The protein is Aspartate--tRNA ligase of Shewanella loihica (strain ATCC BAA-1088 / PV-4).